The sequence spans 982 residues: Serine/threonine-protein kinase ATG1 (982 aa).

One can recognise a Protein kinase domain in the interval F19 to I324. Residues I25 to V33 and K48 each bind ATP. The Proton acceptor role is filled by D162. 4 disordered regions span residues D334–A506, R813–G834, P898–A918, and R947–S982. Composition is skewed to basic and acidic residues over residues D335 to D359 and H372 to E387. Residues P388–S398 show a composition bias toward low complexity. Residues S463–A481 are compositionally biased toward polar residues.

Belongs to the protein kinase superfamily. Ser/Thr protein kinase family. APG1/unc-51/ULK1 subfamily. Homodimer. Forms a ternary complex with ATG13 and ATG17. Uniformly detected in conidia, mycelia and appressoria (at protein level).

It is found in the cytoplasm. Its subcellular location is the preautophagosomal structure membrane. The enzyme catalyses L-seryl-[protein] + ATP = O-phospho-L-seryl-[protein] + ADP + H(+). It catalyses the reaction L-threonyl-[protein] + ATP = O-phospho-L-threonyl-[protein] + ADP + H(+). Its function is as follows. Serine/threonine protein kinase involved in the cytoplasm to vacuole transport (Cvt) and found to be essential in autophagy, where it is required for the formation of autophagosomes. Involved in the clearance of protein aggregates which cannot be efficiently cleared by the proteasome. Required for selective autophagic degradation of the nucleus (nucleophagy) as well as for mitophagy which contributes to regulate mitochondrial quantity and quality by eliminating the mitochondria to a basal level to fulfill cellular energy requirements and preventing excess ROS production. Also involved in endoplasmic reticulum-specific autophagic process, in selective removal of ER-associated degradation (ERAD) substrates. Plays a key role in ATG9 and ATG23 cycling through the pre-autophagosomal structure and is necessary to promote ATG18 binding to ATG9 through phosphorylation of ATG9. Catalyzes phosphorylation of ATG4, decreasing the interaction between ATG4 and ATG8 and impairing deconjugation of PE-conjugated forms of ATG8. Autophagy is essential to fungal development, production of appressorium turgor, and pathogenicity in rice blast disease. The sequence is that of Serine/threonine-protein kinase ATG1 from Pyricularia oryzae (strain 70-15 / ATCC MYA-4617 / FGSC 8958) (Rice blast fungus).